Consider the following 274-residue polypeptide: Thiamine kinase (274 aa).

The protein belongs to the thiamine kinase family.

It catalyses the reaction thiamine + ATP = thiamine phosphate + ADP + H(+). The protein operates within cofactor biosynthesis; thiamine diphosphate biosynthesis; thiamine phosphate from thiamine: step 1/1. Catalyzes the ATP-dependent phosphorylation of thiamine to thiamine phosphate. Is involved in thiamine salvage. In Escherichia coli O9:H4 (strain HS), this protein is Thiamine kinase.